A 442-amino-acid chain; its full sequence is tRNA-2-methylthio-N(6)-dimethylallyladenosine synthase (442 aa).

One can recognise an MTTase N-terminal domain in the interval 2–117 (QGLYIKSYGC…LPELIIKARR (116 aa)). Cys11, Cys47, Cys80, Cys157, Cys161, and Cys164 together coordinate [4Fe-4S] cluster. The Radical SAM core domain maps to 143–374 (KNQEVSAFIS…QELLREQQLA (232 aa)). The 66-residue stretch at 377 to 442 (RNMIGQTCSV…QNSVTGIVVN (66 aa)) folds into the TRAM domain.

The protein belongs to the methylthiotransferase family. MiaB subfamily. In terms of assembly, monomer. [4Fe-4S] cluster is required as a cofactor.

Its subcellular location is the cytoplasm. The catalysed reaction is N(6)-dimethylallyladenosine(37) in tRNA + (sulfur carrier)-SH + AH2 + 2 S-adenosyl-L-methionine = 2-methylsulfanyl-N(6)-dimethylallyladenosine(37) in tRNA + (sulfur carrier)-H + 5'-deoxyadenosine + L-methionine + A + S-adenosyl-L-homocysteine + 2 H(+). Its function is as follows. Catalyzes the methylthiolation of N6-(dimethylallyl)adenosine (i(6)A), leading to the formation of 2-methylthio-N6-(dimethylallyl)adenosine (ms(2)i(6)A) at position 37 in tRNAs that read codons beginning with uridine. The sequence is that of tRNA-2-methylthio-N(6)-dimethylallyladenosine synthase from Ehrlichia chaffeensis (strain ATCC CRL-10679 / Arkansas).